A 181-amino-acid polypeptide reads, in one-letter code: ATP synthase subunit delta (181 aa).

This sequence belongs to the ATPase delta chain family. In terms of assembly, F-type ATPases have 2 components, F(1) - the catalytic core - and F(0) - the membrane proton channel. F(1) has five subunits: alpha(3), beta(3), gamma(1), delta(1), epsilon(1). F(0) has three main subunits: a(1), b(2) and c(10-14). The alpha and beta chains form an alternating ring which encloses part of the gamma chain. F(1) is attached to F(0) by a central stalk formed by the gamma and epsilon chains, while a peripheral stalk is formed by the delta and b chains.

Its subcellular location is the cell inner membrane. In terms of biological role, f(1)F(0) ATP synthase produces ATP from ADP in the presence of a proton or sodium gradient. F-type ATPases consist of two structural domains, F(1) containing the extramembraneous catalytic core and F(0) containing the membrane proton channel, linked together by a central stalk and a peripheral stalk. During catalysis, ATP synthesis in the catalytic domain of F(1) is coupled via a rotary mechanism of the central stalk subunits to proton translocation. Functionally, this protein is part of the stalk that links CF(0) to CF(1). It either transmits conformational changes from CF(0) to CF(1) or is implicated in proton conduction. This Mannheimia succiniciproducens (strain KCTC 0769BP / MBEL55E) protein is ATP synthase subunit delta.